A 578-amino-acid polypeptide reads, in one-letter code: Arginine--tRNA ligase (578 aa).

The 'HIGH' region signature appears at P127–H137.

Belongs to the class-I aminoacyl-tRNA synthetase family. In terms of assembly, monomer.

It is found in the cytoplasm. The enzyme catalyses tRNA(Arg) + L-arginine + ATP = L-arginyl-tRNA(Arg) + AMP + diphosphate. In Pseudomonas savastanoi pv. phaseolicola (strain 1448A / Race 6) (Pseudomonas syringae pv. phaseolicola (strain 1448A / Race 6)), this protein is Arginine--tRNA ligase.